The chain runs to 436 residues: 3-ketoacyl-CoA thiolase (436 aa).

The active-site Acyl-thioester intermediate is the cysteine 99. Residues histidine 392 and cysteine 422 each act as proton acceptor in the active site.

Belongs to the thiolase-like superfamily. Thiolase family. As to quaternary structure, heterotetramer of two alpha chains (FadJ) and two beta chains (FadI).

The protein localises to the cytoplasm. The catalysed reaction is an acyl-CoA + acetyl-CoA = a 3-oxoacyl-CoA + CoA. Its pathway is lipid metabolism; fatty acid beta-oxidation. Catalyzes the final step of fatty acid oxidation in which acetyl-CoA is released and the CoA ester of a fatty acid two carbons shorter is formed. The polypeptide is 3-ketoacyl-CoA thiolase (Salmonella heidelberg (strain SL476)).